We begin with the raw amino-acid sequence, 214 residues long: Pyrrolidone-carboxylate peptidase (214 aa).

Active-site residues include Glu-80, Cys-143, and His-166.

This sequence belongs to the peptidase C15 family. Homotetramer.

The protein localises to the cytoplasm. The enzyme catalyses Release of an N-terminal pyroglutamyl group from a polypeptide, the second amino acid generally not being Pro.. In terms of biological role, removes 5-oxoproline from various penultimate amino acid residues except L-proline. This chain is Pyrrolidone-carboxylate peptidase, found in Enterobacter sp. (strain 638).